Here is a 212-residue protein sequence, read N- to C-terminus: GTP-binding nuclear protein Ran (212 aa).

Positions 3-167 constitute a Small GTPase Ran-type domain; that stretch reads EKEQIKLVLV…VWLTSKLLGN (165 aa). 14-21 provides a ligand contact to GTP; sequence DGGVGKTT. The segment at 33–41 is switch-I; it reads PRYIPTLGV. GTP-binding positions include Gly-64, 118–121, and 146–148; these read NKVD and SAK. The switch-II stretch occupies residues 64 to 80; it reads GQEKFGGLRDGYYIQGN.

This sequence belongs to the small GTPase superfamily. Ran family. As to quaternary structure, found in a nuclear export complex with RanGTP, exportin and pre-miRNA.

It localises to the nucleus. Its function is as follows. GTP-binding protein involved in nucleocytoplasmic transport. Required for the import of protein into the nucleus and also for RNA export. Involved in chromatin condensation and control of cell cycle. In Dictyostelium discoideum (Social amoeba), this protein is GTP-binding nuclear protein Ran (ranA).